The chain runs to 122 residues: Large ribosomal subunit protein uL14c (122 aa).

The protein belongs to the universal ribosomal protein uL14 family. In terms of assembly, part of the 50S ribosomal subunit.

The protein resides in the plastid. The protein localises to the chloroplast. Its function is as follows. Binds to 23S rRNA. This chain is Large ribosomal subunit protein uL14c, found in Cucumis sativus (Cucumber).